Here is a 321-residue protein sequence, read N- to C-terminus: 5,10-methylenetetrahydromethanopterin reductase (321 aa).

It belongs to the mer family. In terms of assembly, homotetramer.

The protein resides in the cytoplasm. It catalyses the reaction 5-methyl-5,6,7,8-tetrahydromethanopterin + oxidized coenzyme F420-(gamma-L-Glu)(n) + H(+) = 5,10-methylenetetrahydromethanopterin + reduced coenzyme F420-(gamma-L-Glu)(n). Its pathway is one-carbon metabolism; methanogenesis from CO(2); methyl-coenzyme M from 5,10-methylene-5,6,7,8-tetrahydromethanopterin: step 1/2. Its function is as follows. Catalyzes the reversible reduction of methylene-H(4)MPT to methyl-H(4)MPT. This chain is 5,10-methylenetetrahydromethanopterin reductase, found in Methanothermobacter marburgensis (strain ATCC BAA-927 / DSM 2133 / JCM 14651 / NBRC 100331 / OCM 82 / Marburg) (Methanobacterium thermoautotrophicum).